Here is a 647-residue protein sequence, read N- to C-terminus: Chaperone protein DnaK (647 aa).

Threonine 198 is modified (phosphothreonine; by autocatalysis). The disordered stretch occupies residues 603–647; sequence EQAQGAGGAQGFDPNAFQGGDAGQQQKADDGVVDAEFTEVKDDKK. A compositionally biased stretch (low complexity) spans 618–628; sequence AFQGGDAGQQQ.

This sequence belongs to the heat shock protein 70 family.

Its function is as follows. Acts as a chaperone. The protein is Chaperone protein DnaK of Acinetobacter baylyi (strain ATCC 33305 / BD413 / ADP1).